Reading from the N-terminus, the 401-residue chain is MSYTHRRSCISGLFLLLLALSCEANSGFIGVKDSHFELNGSPFLFNGFNSYWLMHVAADPAERYKVTEVLKDASTAGLSVCRTWAFSDGGDRALQISPGVYDERVFQGLDFVIAEAKKYGVRLILSFVNQWNDFGGKAEYVWWARNAGVQISNDDEFYTHPILKKYLKNHIEVVTRLNSITKVAYKDDATIMAWELMNEPRDQADYSGKTVNVGWVQEMASFVKSLDNKHLLEVGMEGFYGDSIPERKLVNPGYQVGTDFISNHLINEIDFATIHAYTDQWLSGQSDEAQLAWMEKWIRSHWEDARNILKKPLVLAEFGKSSRSGEGSRDIFMSSVYRNVYNLAKEGGTMGGSLVWQLMAHGMENYDDGYSIVLGLNPSTTQIISNQAHIMTALAHSLNHE.

An N-terminal signal peptide occupies residues 1–24; it reads MSYTHRRSCISGLFLLLLALSCEA. 2 residues coordinate substrate: Trp-84 and Asn-198. Glu-199 (proton donor) is an active-site residue. Position 277 (Tyr-277) interacts with substrate. Glu-317 serves as the catalytic Nucleophile. Substrate is bound at residue Trp-356.

This sequence belongs to the glycosyl hydrolase 5 (cellulase A) family.

It localises to the secreted. The enzyme catalyses Random hydrolysis of (1-&gt;4)-beta-D-mannosidic linkages in mannans, galactomannans and glucomannans.. The chain is Mannan endo-1,4-beta-mannosidase 3 (MAN3) from Solanum lycopersicum (Tomato).